A 287-amino-acid polypeptide reads, in one-letter code: NAD kinase (287 aa).

Catalysis depends on aspartate 56, which acts as the Proton acceptor. Residues 56-57 (DG), arginine 61, 128-129 (ND), and aspartate 156 each bind NAD(+).

It belongs to the NAD kinase family. A divalent metal cation serves as cofactor.

The protein resides in the cytoplasm. It catalyses the reaction NAD(+) + ATP = ADP + NADP(+) + H(+). In terms of biological role, involved in the regulation of the intracellular balance of NAD and NADP, and is a key enzyme in the biosynthesis of NADP. Catalyzes specifically the phosphorylation on 2'-hydroxyl of the adenosine moiety of NAD to yield NADP. This Thermomicrobium roseum (strain ATCC 27502 / DSM 5159 / P-2) protein is NAD kinase.